The following is a 265-amino-acid chain: Glutamate racemase (265 aa).

Residues 7–8 and 39–40 contribute to the substrate site; these read DS and YG. C70 serves as the catalytic Proton donor/acceptor. Residue 71–72 coordinates substrate; sequence NT. The Proton donor/acceptor role is filled by C177.

It belongs to the aspartate/glutamate racemases family.

The enzyme catalyses L-glutamate = D-glutamate. It functions in the pathway cell wall biogenesis; peptidoglycan biosynthesis. Its function is as follows. Provides the (R)-glutamate required for cell wall biosynthesis. This Prochlorococcus marinus (strain NATL2A) protein is Glutamate racemase.